A 370-amino-acid polypeptide reads, in one-letter code: 3-dehydroquinate synthase (370 aa).

NAD(+)-binding positions include 112-116 (GVIGD), 136-137 (TT), K149, K158, and 176-179 (TLAT). Zn(2+)-binding residues include E191, H254, and H276.

It belongs to the sugar phosphate cyclases superfamily. Dehydroquinate synthase family. It depends on Co(2+) as a cofactor. The cofactor is Zn(2+). NAD(+) is required as a cofactor.

The protein localises to the cytoplasm. The catalysed reaction is 7-phospho-2-dehydro-3-deoxy-D-arabino-heptonate = 3-dehydroquinate + phosphate. It functions in the pathway metabolic intermediate biosynthesis; chorismate biosynthesis; chorismate from D-erythrose 4-phosphate and phosphoenolpyruvate: step 2/7. Catalyzes the conversion of 3-deoxy-D-arabino-heptulosonate 7-phosphate (DAHP) to dehydroquinate (DHQ). The sequence is that of 3-dehydroquinate synthase from Xylella fastidiosa (strain M23).